The chain runs to 304 residues: Neurexophilin-4 (304 aa).

The N-terminal stretch at 1–23 is a signal peptide; that stretch reads MRLLPEWLLLLFGPWLLRKVISG. The segment at 24–84 is II; that stretch reads QIVESGRPQY…GALARPGAAG (61 aa). N-linked (GlcNAc...) asparagine glycans are attached at residues N72, N133, N143, and N149. Residues 85-163 are III; sequence GPPVPRTKRK…IVPPSKRVEF (79 aa). The interval 164–220 is IV (linker domain); it reads GGVWLPGPAPHPLQSTLALEGVLPGLGPPLGMAGQGLGGNLGGALAGPLGGALGVPG. A v (Cys-rich) region spans residues 221 to 304; that stretch reads AKESRAFNCH…NFQSEHPYFG (84 aa).

It belongs to the neurexophilin family. May be proteolytically processed in neuron-like cells. As to expression, brain and kidney.

Its subcellular location is the secreted. Its function is as follows. May be signaling molecules that resemble neuropeptides and that act by binding to alpha-neurexins and possibly other receptors. This Rattus norvegicus (Rat) protein is Neurexophilin-4 (Nxph4).